The chain runs to 61 residues: Small ribosomal subunit protein uS14 (61 aa).

Zn(2+)-binding residues include Cys-24, Cys-27, Cys-40, and Cys-43.

It belongs to the universal ribosomal protein uS14 family. Zinc-binding uS14 subfamily. As to quaternary structure, part of the 30S ribosomal subunit. Contacts proteins S3 and S10. The cofactor is Zn(2+).

Its function is as follows. Binds 16S rRNA, required for the assembly of 30S particles and may also be responsible for determining the conformation of the 16S rRNA at the A site. The chain is Small ribosomal subunit protein uS14 from Malacoplasma penetrans (strain HF-2) (Mycoplasma penetrans).